We begin with the raw amino-acid sequence, 136 residues long: Large ribosomal subunit protein uL16 (136 aa).

This sequence belongs to the universal ribosomal protein uL16 family. Part of the 50S ribosomal subunit.

Binds 23S rRNA and is also seen to make contacts with the A and possibly P site tRNAs. The chain is Large ribosomal subunit protein uL16 from Rickettsia peacockii (strain Rustic).